Reading from the N-terminus, the 343-residue chain is Ribosomal RNA small subunit methyltransferase C (343 aa).

It belongs to the methyltransferase superfamily. RsmC family. As to quaternary structure, monomer.

It localises to the cytoplasm. The catalysed reaction is guanosine(1207) in 16S rRNA + S-adenosyl-L-methionine = N(2)-methylguanosine(1207) in 16S rRNA + S-adenosyl-L-homocysteine + H(+). Its function is as follows. Specifically methylates the guanine in position 1207 of 16S rRNA in the 30S particle. The chain is Ribosomal RNA small subunit methyltransferase C from Escherichia coli O81 (strain ED1a).